The sequence spans 211 residues: Pyridoxine/pyridoxamine 5'-phosphate oxidase (211 aa).

Residues 7-10 (RREY) and Lys65 each bind substrate. FMN contacts are provided by residues 60–65 (RIVLLK), 75–76 (YT), Arg81, Lys82, and Gln104. Residues Tyr122, Arg126, and Ser130 each coordinate substrate. FMN is bound by residues 139–140 (QS) and Trp184. 190–192 (RLH) contacts substrate. Arg194 contributes to the FMN binding site.

This sequence belongs to the pyridoxamine 5'-phosphate oxidase family. In terms of assembly, homodimer. It depends on FMN as a cofactor.

The enzyme catalyses pyridoxamine 5'-phosphate + O2 + H2O = pyridoxal 5'-phosphate + H2O2 + NH4(+). It catalyses the reaction pyridoxine 5'-phosphate + O2 = pyridoxal 5'-phosphate + H2O2. It functions in the pathway cofactor metabolism; pyridoxal 5'-phosphate salvage; pyridoxal 5'-phosphate from pyridoxamine 5'-phosphate: step 1/1. It participates in cofactor metabolism; pyridoxal 5'-phosphate salvage; pyridoxal 5'-phosphate from pyridoxine 5'-phosphate: step 1/1. Catalyzes the oxidation of either pyridoxine 5'-phosphate (PNP) or pyridoxamine 5'-phosphate (PMP) into pyridoxal 5'-phosphate (PLP). In Vibrio atlanticus (strain LGP32) (Vibrio splendidus (strain Mel32)), this protein is Pyridoxine/pyridoxamine 5'-phosphate oxidase.